We begin with the raw amino-acid sequence, 89 residues long: Small ribosomal subunit protein uS15 (89 aa).

It belongs to the universal ribosomal protein uS15 family. As to quaternary structure, part of the 30S ribosomal subunit. Forms a bridge to the 50S subunit in the 70S ribosome, contacting the 23S rRNA.

Its function is as follows. One of the primary rRNA binding proteins, it binds directly to 16S rRNA where it helps nucleate assembly of the platform of the 30S subunit by binding and bridging several RNA helices of the 16S rRNA. Functionally, forms an intersubunit bridge (bridge B4) with the 23S rRNA of the 50S subunit in the ribosome. In Chlorobium limicola (strain DSM 245 / NBRC 103803 / 6330), this protein is Small ribosomal subunit protein uS15.